The primary structure comprises 218 residues: MTDGDYDYLIKLLALGDSGVGKTTFLYRYTDNKFNPKFITTVGIDFREKRVVYDTQGADGSSGKAFKVHLQLWDTAGQERFRSLTTAFFRDAMGFLLMFDLTSQQSFLNVRNWMSQLQANAYCENPDIVLIGNKADLLDQREVNERQARELAEKYGIPYFETSAATGQNVEKSVETLLDLIMKRMEKCVEKTQVPDTVNGVNSGKVDGEKPAEKKCAC.

N-acetylthreonine is present on Thr-2. 16–24 (GDSGVGKTT) serves as a coordination point for GTP. The Effector region signature appears at 38–46 (FITTVGIDF). GTP is bound by residues 74 to 78 (DTAGQ), 133 to 136 (NKAD), and 163 to 165 (SAA). A disulfide bond links Cys-123 and Cys-188. 2 S-geranylgeranyl cysteine lipidation sites follow: Cys-216 and Cys-218. Cys-218 is modified (cysteine methyl ester).

Belongs to the small GTPase superfamily. Rab family. Interacts with SYTL2, SYTL4, MYRIP and MLPH. Interacts with RPH3A and RPH3A. Interacts (GDP-bound form preferentially) with DENND10.

It localises to the membrane. The protein resides in the late endosome. The catalysed reaction is GTP + H2O = GDP + phosphate + H(+). With respect to regulation, regulated by guanine nucleotide exchange factors (GEFs) which promote the exchange of bound GDP for free GTP, GTPase activating proteins (GAPs) which increase the GTP hydrolysis activity, and GDP dissociation inhibitors which inhibit the dissociation of the nucleotide from the GTPase. Activated by GEFs such as DENND10. Its function is as follows. Small GTPase which cycles between active GTP-bound and inactive GDP-bound states. In its active state, binds to a variety of effector proteins to regulate homeostasis of late endocytic pathway, including endosomal positioning, maturation and secretion. Plays a role in NTRK2/TRKB axonal anterograde transport by facilitating the association of NTRK2/TRKB with KLC1. May be involved in targeting uroplakins to urothelial apical membranes. This chain is Ras-related protein Rab-27B (Rab27b), found in Rattus norvegicus (Rat).